A 370-amino-acid polypeptide reads, in one-letter code: tRNA-specific 2-thiouridylase MnmA (370 aa).

Residues 9–16 (GMSGGVDS) and Met-35 contribute to the ATP site. The interaction with target base in tRNA stretch occupies residues 95 to 97 (NPD). Cys-100 (nucleophile) is an active-site residue. Cys-100 and Cys-196 are disulfide-bonded. ATP is bound at residue Gly-124. Positions 146–148 (KDQ) are interaction with tRNA. Cys-196 (cysteine persulfide intermediate) is an active-site residue. The segment at 308 to 309 (RY) is interaction with tRNA.

This sequence belongs to the MnmA/TRMU family.

Its subcellular location is the cytoplasm. It catalyses the reaction S-sulfanyl-L-cysteinyl-[protein] + uridine(34) in tRNA + AH2 + ATP = 2-thiouridine(34) in tRNA + L-cysteinyl-[protein] + A + AMP + diphosphate + H(+). Functionally, catalyzes the 2-thiolation of uridine at the wobble position (U34) of tRNA, leading to the formation of s(2)U34. In Ralstonia pickettii (strain 12J), this protein is tRNA-specific 2-thiouridylase MnmA.